We begin with the raw amino-acid sequence, 63 residues long: H/ACA ribonucleoprotein complex subunit 3-like protein (63 aa).

Residues 18–40 form a disordered region; it reads KMDPEGKPTLSAHPARFSPDDKY.

It belongs to the NOP10 family. Component of the small nucleolar ribonucleoprotein particles containing H/ACA-type snoRNAs (H/ACA snoRNPs).

The protein localises to the nucleus. The protein resides in the nucleolus. In terms of biological role, required for ribosome biogenesis. Part of a complex which catalyzes pseudouridylation of rRNA. This involves the isomerization of uridine such that the ribose is subsequently attached to C5, instead of the normal N1. Pseudouridine ('psi') residues may serve to stabilize the conformation of rRNAs. This is H/ACA ribonucleoprotein complex subunit 3-like protein from Trypanosoma cruzi.